We begin with the raw amino-acid sequence, 704 residues long: Elongation factor G (704 aa).

The 284-residue stretch at 8-291 (ANVRNIGIMA…AVIEYLPSPV (284 aa)) folds into the tr-type G domain. Residues 17–24 (AHIDAGKT), 90–94 (DTPGH), and 144–147 (NKMD) contribute to the GTP site.

The protein belongs to the TRAFAC class translation factor GTPase superfamily. Classic translation factor GTPase family. EF-G/EF-2 subfamily.

The protein localises to the cytoplasm. Its function is as follows. Catalyzes the GTP-dependent ribosomal translocation step during translation elongation. During this step, the ribosome changes from the pre-translocational (PRE) to the post-translocational (POST) state as the newly formed A-site-bound peptidyl-tRNA and P-site-bound deacylated tRNA move to the P and E sites, respectively. Catalyzes the coordinated movement of the two tRNA molecules, the mRNA and conformational changes in the ribosome. This Chlorobium phaeobacteroides (strain BS1) protein is Elongation factor G.